Consider the following 156-residue polypeptide: Small ribosomal subunit protein uS7 (156 aa).

The protein belongs to the universal ribosomal protein uS7 family. As to quaternary structure, part of the 30S ribosomal subunit. Contacts proteins S9 and S11.

In terms of biological role, one of the primary rRNA binding proteins, it binds directly to 16S rRNA where it nucleates assembly of the head domain of the 30S subunit. Is located at the subunit interface close to the decoding center, probably blocks exit of the E-site tRNA. The chain is Small ribosomal subunit protein uS7 from Marinobacter nauticus (strain ATCC 700491 / DSM 11845 / VT8) (Marinobacter aquaeolei).